Consider the following 411-residue polypeptide: Tetra-peptide repeat homeobox protein 1 (411 aa).

Positions 3-24 form a DNA-binding region, homeobox; it reads SLREQQLQVWFKNRRAKLARER. 4 disordered regions span residues 20 to 63, 88 to 246, 286 to 340, and 363 to 411; these read LARE…SGIL, IPAA…ISGP, PILS…SPDA, and LEGS…LLDL. Over residues 27 to 55 the composition is skewed to low complexity; the sequence is QQQPQRVPGQRGRGARAAPLVPAASASAP. Composition is skewed to pro residues over residues 95–139 and 149–246; these read GPGP…PGPI and FRGP…ISGP. The span at 295–307 shows a compositional bias: low complexity; it reads SPGSLPGLAPILG. Over residues 319 to 335 the composition is skewed to pro residues; sequence APIPGPGSLPAPAPLWP. Composition is skewed to polar residues over residues 366–376 and 388–402; these read SSVSTMTSQYQ and GSQPQEEGGSVNENH.

This sequence belongs to the paired homeobox family.

It is found in the nucleus. Its function is as follows. Transcription factor expressed after fertilization required for zygotic genome activation (ZGA), a critical event in early embryonic development during which the developmental control passes from maternally provided mRNAs to the expression of the zygotic genome after fertilization. Binds and activates expression of key ZGA marker genes, such as NANOGNB, ZSCAN4, DUXB, KLF5 and DPPA3. Binds to regulatory DNA sequences containing a 5'-TAATCC-3' sequence motif. This is Tetra-peptide repeat homeobox protein 1 from Homo sapiens (Human).